Reading from the N-terminus, the 354-residue chain is Probable butyrate kinase 2 (354 aa).

This sequence belongs to the acetokinase family.

Its subcellular location is the cytoplasm. The catalysed reaction is butanoate + ATP = butanoyl phosphate + ADP. In Caldanaerobacter subterraneus subsp. tengcongensis (strain DSM 15242 / JCM 11007 / NBRC 100824 / MB4) (Thermoanaerobacter tengcongensis), this protein is Probable butyrate kinase 2.